The sequence spans 239 residues: Ribonuclease PH (239 aa).

Residues Arg86 and 124–126 contribute to the phosphate site; that span reads GTR.

Belongs to the RNase PH family. Homohexameric ring arranged as a trimer of dimers.

It carries out the reaction tRNA(n+1) + phosphate = tRNA(n) + a ribonucleoside 5'-diphosphate. Its function is as follows. Phosphorolytic 3'-5' exoribonuclease that plays an important role in tRNA 3'-end maturation. Removes nucleotide residues following the 3'-CCA terminus of tRNAs; can also add nucleotides to the ends of RNA molecules by using nucleoside diphosphates as substrates, but this may not be physiologically important. Probably plays a role in initiation of 16S rRNA degradation (leading to ribosome degradation) during starvation. This chain is Ribonuclease PH, found in Anaeromyxobacter dehalogenans (strain 2CP-1 / ATCC BAA-258).